Reading from the N-terminus, the 292-residue chain is Elongation factor Ts (292 aa).

The involved in Mg(2+) ion dislocation from EF-Tu stretch occupies residues 82 to 85; the sequence is TDFV.

The protein belongs to the EF-Ts family.

It localises to the cytoplasm. In terms of biological role, associates with the EF-Tu.GDP complex and induces the exchange of GDP to GTP. It remains bound to the aminoacyl-tRNA.EF-Tu.GTP complex up to the GTP hydrolysis stage on the ribosome. This Bordetella avium (strain 197N) protein is Elongation factor Ts.